Consider the following 288-residue polypeptide: Polyamine aminopropyltransferase (288 aa).

One can recognise a PABS domain in the interval 9-238 (ETLHDQFGQY…GIMTFAWATD (230 aa)). An S-methyl-5'-thioadenosine-binding site is contributed by glutamine 33. Spermidine is bound by residues histidine 64 and aspartate 88. S-methyl-5'-thioadenosine-binding positions include glutamate 108 and 140–141 (DG). Catalysis depends on aspartate 158, which acts as the Proton acceptor. 158 to 161 (DCTD) provides a ligand contact to spermidine. Residue proline 165 participates in S-methyl-5'-thioadenosine binding.

Belongs to the spermidine/spermine synthase family. As to quaternary structure, homodimer or homotetramer.

The protein localises to the cytoplasm. The enzyme catalyses S-adenosyl 3-(methylsulfanyl)propylamine + putrescine = S-methyl-5'-thioadenosine + spermidine + H(+). It participates in amine and polyamine biosynthesis; spermidine biosynthesis; spermidine from putrescine: step 1/1. Its function is as follows. Catalyzes the irreversible transfer of a propylamine group from the amino donor S-adenosylmethioninamine (decarboxy-AdoMet) to putrescine (1,4-diaminobutane) to yield spermidine. The protein is Polyamine aminopropyltransferase of Escherichia coli O17:K52:H18 (strain UMN026 / ExPEC).